Here is a 285-residue protein sequence, read N- to C-terminus: MAFMDKSEVRQRLQKVLQQCAKAPTWSPKEEVRQSIFWKSIRAELIGSLVLMVFSCSRDSIYGPVSYGCTYAILSYCFKSISAHFNPVITIAALLLRSITPFRCISLVLAQTLGTLSGASVCYYGLSNETETGSAPISPVLNVSPAKGFGYEFFGTFVIILTMSSYLDCNDYVSESGDSNLLPLIFGLSVGLSSGMARQATGGFLNPMRAFSLALFELNHWSNHYIYWIGPIFGCLLAVFTFDYTRPIIPNRDSNNRINFPTFNKNNKYEVEMQPETEITLATLA.

The next 3 helical transmembrane spans lie at 36-56, 76-96, and 105-125; these read IFWKSIRAELIGSLVLMVFSC, YCFKSISAHFNPVITIAALLL, and ISLVLAQTLGTLSGASVCYYG. Positions 86–88 match the NPA 1 motif; that stretch reads NPV. An N-linked (GlcNAc...) asparagine glycan is attached at N128. A run of 2 helical transmembrane segments spans residues 143-163 and 177-197; these read VSPAKGFGYEFFGTFVIILTM and GDSNLLPLIFGLSVGLSSGMA. Positions 206–208 match the NPA 2 motif; sequence NPM. The helical transmembrane segment at 225-245 threads the bilayer; the sequence is YIYWIGPIFGCLLAVFTFDYT.

This sequence belongs to the MIP/aquaporin (TC 1.A.8) family.

Its subcellular location is the cell membrane. Probable water-specific aquaporin that may modulate the water content and osmolytes during anhydrobiosis. The sequence is that of Aquaporin-6 from Milnesium tardigradum (Water bear).